The following is a 752-amino-acid chain: Probable GTP-binding protein OBGC1, chloroplastic (752 aa).

The transit peptide at 1–90 directs the protein to the chloroplast; that stretch reads MAPAVAVVAA…RFPTANPEPR (90 aa). The disordered stretch occupies residues 19–121; that stretch reads FSAEARRNTK…EEDEVELGLR (103 aa). Over residues 26 to 36 the composition is skewed to basic residues; it reads NTKGSRSKRGS. Residues 103 to 117 are compositionally biased toward acidic residues; the sequence is GDDEEDEEEEEDEVE. Residues 294–452 enclose the Obg domain; it reads MRCFDTAKIY…MWIDLELKLV (159 aa). The 169-residue stretch at 453-621 folds into the OBG-type G domain; the sequence is ADVGIVGAPN…VVLAAYKVLQ (169 aa). GTP-binding positions include 459–466, 484–488, 506–509, 573–576, and 602–604; these read GAPNAGKS, FTTLL, DLPG, NKMD, and SAM. Mg(2+) is bound by residues S466 and T486. The OCT domain occupies 649–728; that stretch reads ERRAPMNEFE…VGEMEMVWTD (80 aa). Positions 728-752 are disordered; sequence DEPSKTRSSKTMNSKDDSVRWPEFG. The span at 740–752 shows a compositional bias: basic and acidic residues; it reads NSKDDSVRWPEFG.

It belongs to the TRAFAC class OBG-HflX-like GTPase superfamily. OBG GTPase family. Mg(2+) serves as cofactor.

It localises to the plastid. It is found in the chloroplast. Functionally, probable GTP-binding protein that may play a role in chloroplast development. The chain is Probable GTP-binding protein OBGC1, chloroplastic (OBGC1) from Oryza sativa subsp. indica (Rice).